The sequence spans 231 residues: 5'-methylthioadenosine/S-adenosylhomocysteine nucleosidase (231 aa).

Glu-12 acts as the Proton acceptor in catalysis. Substrate is bound by residues Gly-78, Val-153, and 174-175 (ME). The active-site Proton donor is Asp-198.

Belongs to the PNP/UDP phosphorylase family. MtnN subfamily.

The enzyme catalyses S-adenosyl-L-homocysteine + H2O = S-(5-deoxy-D-ribos-5-yl)-L-homocysteine + adenine. It carries out the reaction S-methyl-5'-thioadenosine + H2O = 5-(methylsulfanyl)-D-ribose + adenine. The catalysed reaction is 5'-deoxyadenosine + H2O = 5-deoxy-D-ribose + adenine. It participates in amino-acid biosynthesis; L-methionine biosynthesis via salvage pathway; S-methyl-5-thio-alpha-D-ribose 1-phosphate from S-methyl-5'-thioadenosine (hydrolase route): step 1/2. Functionally, catalyzes the irreversible cleavage of the glycosidic bond in both 5'-methylthioadenosine (MTA) and S-adenosylhomocysteine (SAH/AdoHcy) to adenine and the corresponding thioribose, 5'-methylthioribose and S-ribosylhomocysteine, respectively. Also cleaves 5'-deoxyadenosine, a toxic by-product of radical S-adenosylmethionine (SAM) enzymes, into 5-deoxyribose and adenine. The chain is 5'-methylthioadenosine/S-adenosylhomocysteine nucleosidase from Vibrio atlanticus (strain LGP32) (Vibrio splendidus (strain Mel32)).